The primary structure comprises 572 residues: mRNA cap guanine-N(7) methyltransferase (572 aa).

2 disordered regions span residues 1 to 75 and 110 to 140; these read MPED…GSRV and EKAI…FPSS. 2 stretches are compositionally biased toward basic and acidic residues: residues 24-39 and 59-69; these read ANDG…RVHD and SADENKDKKYD. The span at 123–140 shows a compositional bias: low complexity; the sequence is TTTTPSSTTSSSSSFPSS. In terms of domain architecture, mRNA cap 0 methyltransferase spans 262–571; that stretch reads SPIYKLRNFN…FYVAFVFEKV (310 aa). 271–272 is a binding site for mRNA; the sequence is NN. Residues K275, C302, D324, D366, Q396, and Y401 each contribute to the S-adenosyl-L-methionine site.

It belongs to the class I-like SAM-binding methyltransferase superfamily. mRNA cap 0 methyltransferase family.

The protein resides in the nucleus. The enzyme catalyses a 5'-end (5'-triphosphoguanosine)-ribonucleoside in mRNA + S-adenosyl-L-methionine = a 5'-end (N(7)-methyl 5'-triphosphoguanosine)-ribonucleoside in mRNA + S-adenosyl-L-homocysteine. In terms of biological role, responsible for methylating the 5'-cap structure of mRNAs. This Lodderomyces elongisporus (strain ATCC 11503 / CBS 2605 / JCM 1781 / NBRC 1676 / NRRL YB-4239) (Yeast) protein is mRNA cap guanine-N(7) methyltransferase (ABD1).